The chain runs to 34 residues: Photosystem II reaction center protein Psb30 (34 aa).

A helical membrane pass occupies residues valine 6–valine 26.

This sequence belongs to the Psb30/Ycf12 family. As to quaternary structure, PSII is composed of 1 copy each of membrane proteins PsbA, PsbB, PsbC, PsbD, PsbE, PsbF, PsbH, PsbI, PsbJ, PsbK, PsbL, PsbM, PsbT, PsbX, PsbY, PsbZ, Psb30/Ycf12, peripheral proteins of the oxygen-evolving complex and a large number of cofactors. It forms dimeric complexes.

The protein localises to the plastid. Its subcellular location is the chloroplast thylakoid membrane. In terms of biological role, a core subunit of photosystem II (PSII), probably helps stabilize the reaction center. This is Photosystem II reaction center protein Psb30 from Heterosigma akashiwo (strain NIES-293 / 8280G21-1).